A 378-amino-acid chain; its full sequence is Plant intracellular Ras-group-related LRR protein 8 (378 aa).

The Ubiquitin-like domain occupies 10 to 86; that stretch reads PTITVQVKFG…VMLMASQGLH (77 aa). The tract at residues 85–120 is disordered; it reads LHQGDGPITKNSSVPAPSTRRASNVKEAQIQKSDTN. Polar residues predominate over residues 93–106; that stretch reads TKNSSVPAPSTRRA. 9 LRR repeats span residues 129 to 152, 153 to 176, 178 to 201, 202 to 225, 226 to 250, 252 to 271, 272 to 293, 294 to 317, and 319 to 344; these read WKAT…VWGC, GSSI…IAAL, SLQK…GLTC, VQTL…LGSI, THLR…LLKH, EILI…IGGC, ESLN…AFGN, LQHL…FFIK, and SQLI…GWEE.

It belongs to the SHOC2 family. As to expression, widely expressed except in panicles.

Functionally, leucine-rich repeat protein that likely mediates protein interactions, possibly in the context of signal transduction. The sequence is that of Plant intracellular Ras-group-related LRR protein 8 (IRL8) from Oryza sativa subsp. japonica (Rice).